Consider the following 384-residue polypeptide: Na(+)/H(+) antiporter NhaA (384 aa).

The next 11 helical transmembrane spans lie at 9-29 (NLETIGGILLFIAAVLAIIIA), 58-78 (LLLWINDGLMAIYFLLIGLEI), 94-114 (LVPALTALAGLLFPALIFIFF), 124-144 (GWAIPTATDIAFTLGIVSLLG), 153-173 (ILLTAIAIFDDIAAIVIIALF), 179-199 (SLLSLSLALVFTLILIGLNYF), 204-224 (ISVFMLFGVALWIAVLKSGVH), 256-276 (VVFLILPLFAFANAGVSFVGL), 285-305 (VVLGIGLGLFLGKQLGIFLSL), 325-345 (VYGIALICGVGFTMSLFIGSL), and 357-377 (MVKIGVVFGSFIAGLTGFLVL).

Belongs to the NhaA Na(+)/H(+) (TC 2.A.33) antiporter family.

Its subcellular location is the cell inner membrane. It carries out the reaction Na(+)(in) + 2 H(+)(out) = Na(+)(out) + 2 H(+)(in). Its function is as follows. Na(+)/H(+) antiporter that extrudes sodium in exchange for external protons. This is Na(+)/H(+) antiporter NhaA from Legionella pneumophila (strain Lens).